Reading from the N-terminus, the 460-residue chain is Ammonium transporter Rh type B-B (460 aa).

Over 1-10 (MTSYSTNMRI) the chain is Cytoplasmic. A helical transmembrane segment spans residues 11-31 (KLPLFCLLLQFITIILFAVFV). Residues 32–62 (RYDHESDARGWHEELNNHSSSNADNDFYYRY) lie on the Extracellular side of the membrane. Residue N48 is glycosylated (N-linked (GlcNAc...) asparagine). The chain crosses the membrane as a helical span at residues 63 to 83 (PSFQDVHVMIFIGFGFLMTFL). The Cytoplasmic portion of the chain corresponds to 84 to 87 (KRYG). Residues 88–108 (FSSVAFNFLIAAFGLQWSTLI) traverse the membrane as a helical segment. At 109–125 (QGFFHGFHDGKIHVGIE) the chain is on the extracellular side. A helical membrane pass occupies residues 126 to 146 (SMINADFCTGAVLISFGAVLG). At 147 to 150 (KTSP) the chain is on the cytoplasmic side. Residues 151–171 (VQLIIMTLVEVTLFGINEYII) traverse the membrane as a helical segment. The Extracellular portion of the chain corresponds to 172–179 (LNIVGAKD). The helical transmembrane segment at 180 to 202 (AGGSMTIHTFGAYFGLIVSRVLY) threads the bilayer. The Cytoplasmic portion of the chain corresponds to 203 to 220 (REDLEKSRQREGSVYHSD). The chain crosses the membrane as a helical span at residues 221 to 241 (LFAMIGTIYLWMFWPSFNSAV). At 242–252 (TAHGDDQHRTV) the chain is on the extracellular side. Residues 253 to 273 (MNTYYSLAACTLATFGFSALL) form a helical membrane-spanning segment. Residues 274-283 (NGEGKLDMVH) lie on the Cytoplasmic side of the membrane. The chain crosses the membrane as a helical span at residues 284–304 (IQNAALAGGVAVGTSGEMMLT). Position 305 (P305) is a topological domain, extracellular. Residues 306–326 (FGAMIAGTLAGMISVLGYKYL) form a helical membrane-spanning segment. The Cytoplasmic portion of the chain corresponds to 327–347 (TPVLDSKLKIQDTCGVHNLHG). The helical transmembrane segment at 348 to 368 (MPGILGAIIGAIVALFATADI) threads the bilayer. Residues 369–394 (YGDGMGDVFPLISDGSRTAKQQSLYQ) lie on the Extracellular side of the membrane. The helical transmembrane segment at 395-415 (FLALLVALGFAIIGGTVVGFI) threads the bilayer. The Cytoplasmic portion of the chain corresponds to 416 to 460 (LKLPIFGTPSDAECFEDAIYWEVPGGEGHQQLTVVINNEDPDTQA).

Belongs to the ammonium transporter (TC 2.A.49) family. Rh subfamily.

The protein localises to the basolateral cell membrane. Its subcellular location is the cytoplasmic vesicle membrane. Functionally, functions as a specific ammonium transporter. In Xenopus laevis (African clawed frog), this protein is Ammonium transporter Rh type B-B (rhbg-b).